Here is a 641-residue protein sequence, read N- to C-terminus: Transcription termination factor MTERF2, chloroplastic (641 aa).

Disordered stretches follow at residues 54 to 80 (LKLN…DLDG) and 606 to 641 (FEAG…DLTE). Residues 610 to 641 (LDSEDSQPSDENISDQEIAFSDEAEEEEDLTE) are compositionally biased toward acidic residues.

This sequence belongs to the mTERF family.

Its subcellular location is the plastid. The protein localises to the chloroplast. Its function is as follows. Transcription termination factor involved in processing of plastid transcripts. Essential for embryogenesis. In Arabidopsis thaliana (Mouse-ear cress), this protein is Transcription termination factor MTERF2, chloroplastic.